The sequence spans 366 residues: Peptide chain release factor 1 (366 aa).

Residue Gln239 is modified to N5-methylglutamine.

Belongs to the prokaryotic/mitochondrial release factor family. Methylated by PrmC. Methylation increases the termination efficiency of RF1.

The protein localises to the cytoplasm. Its function is as follows. Peptide chain release factor 1 directs the termination of translation in response to the peptide chain termination codons UAG and UAA. The polypeptide is Peptide chain release factor 1 (Albidiferax ferrireducens (strain ATCC BAA-621 / DSM 15236 / T118) (Rhodoferax ferrireducens)).